We begin with the raw amino-acid sequence, 428 residues long: Trigger factor (428 aa).

Residues 163-248 form the PPIase FKBP-type domain; the sequence is GDTAVIDFEG…INEVKAKELP (86 aa).

Belongs to the FKBP-type PPIase family. Tig subfamily.

Its subcellular location is the cytoplasm. It catalyses the reaction [protein]-peptidylproline (omega=180) = [protein]-peptidylproline (omega=0). In terms of biological role, involved in protein export. Acts as a chaperone by maintaining the newly synthesized protein in an open conformation. Functions as a peptidyl-prolyl cis-trans isomerase. The sequence is that of Trigger factor from Oceanobacillus iheyensis (strain DSM 14371 / CIP 107618 / JCM 11309 / KCTC 3954 / HTE831).